The chain runs to 87 residues: Small cysteine-rich outer membrane protein omcA (87 aa).

An N-terminal signal peptide occupies residues 1–19 (MKKAVLLATVFCGVVGLTS). Cysteine 20 carries the N-palmitoyl cysteine lipid modification. The S-diacylglycerol cysteine moiety is linked to residue cysteine 20.

Part of a disulfide cross-linked outer membrane complex (COMC) composed of the major outer membrane porin (MOMP), the small cysteine-rich protein (omcA) and the large cysteine-rich periplasmic protein (omcB). N-terminal amide-linked and S-diacylglycerol cysteine-linked to 16:0, 18:0, 15:0 branched, and 17:0 branched fatty acids (ratio 6:5:3:4) in the EB stage. The exact distribution of fatty acids has not been determined. Post-translationally, the N-terminus is blocked.

It is found in the cell outer membrane. In elementary bodies (EBs, the infectious stage, which is able to survive outside the host cell) provides the structural integrity of the outer envelope through disulfide cross-links with the large cysteine-rich periplasmic protein and the major outer membrane porin. It has been described in publications as the Sarkosyl-insoluble COMC (Chlamydia outer membrane complex), and serves as the functional equivalent of peptidoglycan. This is Small cysteine-rich outer membrane protein omcA (omcA) from Chlamydia psittaci (Chlamydophila psittaci).